The chain runs to 361 residues: Geranylgeranyl pyrophosphate synthase 3 (361 aa).

Positions 44 to 63 are disordered; sequence DSNGSKELAPNGAQSRVQKP. Lys-81, Arg-84, and His-113 together coordinate isopentenyl diphosphate. Mg(2+)-binding residues include Asp-120 and Asp-124. Arg-129 serves as a coordination point for dimethylallyl diphosphate. Arg-130 lines the isopentenyl diphosphate pocket. Residues Lys-207, Thr-208, and Gln-244 each coordinate dimethylallyl diphosphate. Asp-247 is a binding site for Mg(2+). The dimethylallyl diphosphate site is built by Asn-251, Lys-261, and Lys-271.

The protein belongs to the FPP/GGPP synthase family. The cofactor is Mg(2+).

The enzyme catalyses isopentenyl diphosphate + dimethylallyl diphosphate = (2E)-geranyl diphosphate + diphosphate. The catalysed reaction is isopentenyl diphosphate + (2E)-geranyl diphosphate = (2E,6E)-farnesyl diphosphate + diphosphate. It catalyses the reaction isopentenyl diphosphate + (2E,6E)-farnesyl diphosphate = (2E,6E,10E)-geranylgeranyl diphosphate + diphosphate. Geranylgeranyl pyrophosphate synthase; part of the gene cluster 25 that mediates the biosynthesis of an isoprenoid secondary metabolite. This Zymoseptoria tritici (strain CBS 115943 / IPO323) (Speckled leaf blotch fungus) protein is Geranylgeranyl pyrophosphate synthase 3 (GGS3).